A 253-amino-acid polypeptide reads, in one-letter code: MRVSQTYGLVLYNRNYREDDKLVKIFTETEGKRMFFVKHASKSKFNAVLQPLTIAHFILKINDNGLSYIDDYKEVLAFQETNSDLFKLSYASYITSLADVAISDNVADAQLFIFLKKTLELIEDGLDYEILTNIFEVQLLERFGVALNFHDCVFCHRVGLPFDFSHKYSGLLCPNHYYKDERRNHLDPNMLYLINRFQSIQFDDLQTISVKPEMKLKIRQFLDMIYDEYVGIHLKSKKFIDDLSSWGSIMKSD.

Belongs to the RecO family.

Its function is as follows. Involved in DNA repair and RecF pathway recombination. The chain is DNA repair protein RecO from Streptococcus agalactiae serotype III (strain NEM316).